The following is a 144-amino-acid chain: Maximins 7/H1 (144 aa).

A signal peptide spans 1-18; that stretch reads MNFKYIVAVSFLIASAYA. Residues 19–43 constitute a propeptide that is removed on maturation; the sequence is RSEENDEQSLSQRDVLEEESLREIR. Asn70 bears the Asparagine amide mark. The propeptide occupies 74–123; that stretch reads TAEDHEVMKRLEAVMRDLDSLDYPEEAAERETRGFNQEEIANLFTKKEKR. Residue Leu143 is modified to Leucine amide.

Belongs to the bombinin family. Expressed by the skin glands.

The protein localises to the secreted. In terms of biological role, maximin-7 shows antimicrobial activity against bacteria and against the fungus C.albicans. It has little hemolytic activity. Maximin-H1 shows antibacterial activity against both Gram-positive and Gram-negative bacteria. It also shows antimicrobial activity against the fungus C.albicans. Shows strong hemolytic activity. This chain is Maximins 7/H1, found in Bombina maxima (Giant fire-bellied toad).